The sequence spans 129 residues: Putative F-box protein At3g42722 (129 aa).

The F-box domain maps to 4-50; sequence MASIDCLPDELLVGILSFILTNEAASTSILSKRWRTLFAFSHNLDCN.

The polypeptide is Putative F-box protein At3g42722 (Arabidopsis thaliana (Mouse-ear cress)).